Reading from the N-terminus, the 117-residue chain is DNA-directed RNA polymerase subunit omega (117 aa).

Over residues 96–105 the composition is skewed to basic and acidic residues; it reads KEEAEEEAKQ. The disordered stretch occupies residues 96-117; it reads KEEAEEEAKQKNSRAAKAAAAE. Positions 108 to 117 are enriched in low complexity; that stretch reads SRAAKAAAAE.

It belongs to the RNA polymerase subunit omega family. The RNAP catalytic core consists of 2 alpha, 1 beta, 1 beta' and 1 omega subunit. When a sigma factor is associated with the core the holoenzyme is formed, which can initiate transcription.

It catalyses the reaction RNA(n) + a ribonucleoside 5'-triphosphate = RNA(n+1) + diphosphate. Functionally, promotes RNA polymerase assembly. Latches the N- and C-terminal regions of the beta' subunit thereby facilitating its interaction with the beta and alpha subunits. The chain is DNA-directed RNA polymerase subunit omega from Lactococcus lactis subsp. cremoris (strain MG1363).